Consider the following 447-residue polypeptide: GTPase Der (447 aa).

EngA-type G domains are found at residues 3–167 and 181–354; these read PVIA…VQER and VKIA…AAAM. GTP contacts are provided by residues 9–16, 56–60, 119–122, 187–194, 234–238, and 299–302; these read GRPNVGKS, DTGGF, NKAE, DTAGL, and NKWD. The KH-like domain maps to 355–439; sequence VKLPTPQLTR…PLRIEFRTNK (85 aa).

This sequence belongs to the TRAFAC class TrmE-Era-EngA-EngB-Septin-like GTPase superfamily. EngA (Der) GTPase family. As to quaternary structure, associates with the 50S ribosomal subunit.

Its function is as follows. GTPase that plays an essential role in the late steps of ribosome biogenesis. The protein is GTPase Der of Cupriavidus pinatubonensis (strain JMP 134 / LMG 1197) (Cupriavidus necator (strain JMP 134)).